Consider the following 104-residue polypeptide: Enhancer of rudimentary homolog (104 aa).

Serine 2 is modified (N-acetylserine). Threonine 11 is subject to Phosphothreonine. Residue lysine 12 forms a Glycyl lysine isopeptide (Lys-Gly) (interchain with G-Cter in SUMO2) linkage.

The protein belongs to the E(R) family. Homodimer.

It localises to the nucleus. Functionally, may have a role in the cell cycle. The protein is Enhancer of rudimentary homolog (ERH) of Bos taurus (Bovine).